We begin with the raw amino-acid sequence, 316 residues long: MAEAALEAVRSELREFPAAARELCVPLAVPYLDKPPTPLHFYRDWVCPNRPCIIRNALQHWPALQKWSLPYFRATVGSTEVSVAVTPDGYADAVRGDRFMMPAERRLPLSFVLDVLEGRAQHPGVLYVQKQCSNLPSELPQLLPDLESHVPWASEALGKMPDAVNFWLGEAAAVTSLHKDHYENLYCVVSGEKHFLFHPPSDRPFIPYELYTPATYQLTEEGTFKVVDEEAMEKVPWIPLDPLAPDLARYPSYSQAQALRCTVRAGEMLYLPALWFHHVQQSQGCIAVNFWYDMEYDLKYSYFQLLDSLTKASGLD.

Residues 128-307 (VQKQCSNLPS…LKYSYFQLLD (180 aa)) form the JmjC domain. Residues His-178, Asp-180, and His-277 each coordinate Fe cation.

As to quaternary structure, homodimer; disulfide-linked. Interacts with DRG1 and DRG2. Fe(2+) serves as cofactor.

The protein resides in the nucleus. It localises to the cytoplasm. The enzyme catalyses L-lysyl-[protein] + 2-oxoglutarate + O2 = (3S)-3-hydroxy-L-lysyl-[protein] + succinate + CO2. Its function is as follows. Bifunctional enzyme that acts both as an endopeptidase and 2-oxoglutarate-dependent monooxygenase. Endopeptidase that cleaves histones N-terminal tails at the carboxyl side of methylated arginine or lysine residues, to generate 'tailless nucleosomes', which may trigger transcription elongation. Preferentially recognizes and cleaves monomethylated and dimethylated arginine residues of histones H2, H3 and H4. After initial cleavage, continues to digest histones tails via its aminopeptidase activity. Additionally, may play a role in protein biosynthesis by modifying the translation machinery. Acts as a Fe(2+) and 2-oxoglutarate-dependent monooxygenase, catalyzing (S)-stereospecific hydroxylation at C-3 of 'Lys-22' of DRG1 and 'Lys-21' of DRG2 translation factors (TRAFAC), promoting their interaction with ribonucleic acids (RNA). The protein is Bifunctional peptidase and (3S)-lysyl hydroxylase JMJD7 of Homo sapiens (Human).